Here is a 598-residue protein sequence, read N- to C-terminus: Arylsulfatase J (598 aa).

Residues 1–47 (MAPRDSAEPLPPLSPQAWAWSGKFLAMGALAGFSVLSLLTYGYLCWG) form the signal peptide. Ca(2+)-binding residues include aspartate 82, aspartate 83, and cysteine 120. The active-site Nucleophile is cysteine 120. The residue at position 120 (cysteine 120) is a 3-oxoalanine (Cys). A glycan (N-linked (GlcNAc...) asparagine) is linked at asparagine 155. Lysine 174 is a binding site for substrate. Histidine 176 is a catalytic residue. Substrate is bound at residue histidine 267. N-linked (GlcNAc...) asparagine glycans are attached at residues asparagine 304 and asparagine 316. Aspartate 325 and asparagine 326 together coordinate Ca(2+). Substrate is bound at residue lysine 343. N-linked (GlcNAc...) asparagine glycans are attached at residues asparagine 429, asparagine 495, asparagine 525, and asparagine 563. The interval 532–598 (RYPPKDPRSN…IKCHPSVATG (67 aa)) is disordered. The span at 559-583 (KKKSNKTKAKKMQKKKSKARMRKQL) shows a compositional bias: basic residues.

Belongs to the sulfatase family. Requires Ca(2+) as cofactor. Post-translationally, the conversion to 3-oxoalanine (also known as C-formylglycine, FGly), of a serine or cysteine residue in prokaryotes and of a cysteine residue in eukaryotes, is critical for catalytic activity.

The protein resides in the secreted. This Mus musculus (Mouse) protein is Arylsulfatase J (Arsj).